We begin with the raw amino-acid sequence, 160 residues long: Prorelaxin (160 aa).

3 disulfides stabilise this stretch: Cys10/Cys147, Cys22/Cys160, and Cys146/Cys151. Positions 34–133 (QEKQRILGSG…KDFNLNIYSP (100 aa)) are cleaved as a propeptide — connecting peptide.

Belongs to the insulin family. Heterodimer of a B chain and an A chain linked by two disulfide bonds. In terms of tissue distribution, expressed in the endometrium during pregnancy and in mammary gland during lactation.

The protein localises to the secreted. Relaxin is an ovarian hormone that acts with estrogen to produce dilatation of the birth canal in many mammals. It bears mature young, and allows separation of the pelvic bones. The chain is Prorelaxin (RLN) from Cavia porcellus (Guinea pig).